We begin with the raw amino-acid sequence, 388 residues long: MNLHEYQAKELLASYGLPVQGGILAHNGEEAAAAYDKLGGKFAVVKAQVHAGGRGKAGGVKVVKSREEAKEVAESLIGTNLVTYQTDANGQPVNSVLVCEDMYPVQTELYLGAVVDRSTRRVTFMASTEGGVEIEKVAAETPEKIFKVTVDPLVGLQPCQAREVAFQLGLKDKQINEFVKLMTGAYKAFVENDFALFEVNPLAVRENGALACVDGKIGIDSNALYRLPKIAELRDKSQENERELKASEFDLNYVALEGNIGCMVNGAGLAMATMDIIKLKGGQPANFLDVGGGATKDRVVEAFKLILEDKSVKGVLINIFGGIVRCDMIAEAIVAAVKEINVDVPVVVRLEGNNAELGAKILNESGLKLTSADGLNDAAEKIVAAVNA.

One can recognise an ATP-grasp domain in the interval 9 to 245 (KELLASYGLP…KSQENERELK (237 aa)). ATP is bound by residues K46, 53 to 55 (GRG), E100, Y103, and E108. Residues N200 and D214 each contribute to the Mg(2+) site. Substrate contacts are provided by residues N265 and 322–324 (GIV).

Belongs to the succinate/malate CoA ligase beta subunit family. Heterotetramer of two alpha and two beta subunits. Requires Mg(2+) as cofactor.

The enzyme catalyses succinate + ATP + CoA = succinyl-CoA + ADP + phosphate. The catalysed reaction is GTP + succinate + CoA = succinyl-CoA + GDP + phosphate. It functions in the pathway carbohydrate metabolism; tricarboxylic acid cycle; succinate from succinyl-CoA (ligase route): step 1/1. In terms of biological role, succinyl-CoA synthetase functions in the citric acid cycle (TCA), coupling the hydrolysis of succinyl-CoA to the synthesis of either ATP or GTP and thus represents the only step of substrate-level phosphorylation in the TCA. The beta subunit provides nucleotide specificity of the enzyme and binds the substrate succinate, while the binding sites for coenzyme A and phosphate are found in the alpha subunit. In Neisseria meningitidis serogroup A / serotype 4A (strain DSM 15465 / Z2491), this protein is Succinate--CoA ligase [ADP-forming] subunit beta.